Reading from the N-terminus, the 277-residue chain is Release factor glutamine methyltransferase (277 aa).

S-adenosyl-L-methionine is bound by residues 117–121, Asp-140, Trp-168, and Asn-183; that span reads GTGTG. Residue 183–186 participates in substrate binding; that stretch reads NPPY.

It belongs to the protein N5-glutamine methyltransferase family. PrmC subfamily.

The catalysed reaction is L-glutaminyl-[peptide chain release factor] + S-adenosyl-L-methionine = N(5)-methyl-L-glutaminyl-[peptide chain release factor] + S-adenosyl-L-homocysteine + H(+). Methylates the class 1 translation termination release factors RF1/PrfA and RF2/PrfB on the glutamine residue of the universally conserved GGQ motif. The chain is Release factor glutamine methyltransferase from Salmonella typhimurium (strain LT2 / SGSC1412 / ATCC 700720).